Consider the following 430-residue polypeptide: Pyrokinin-1 receptor (430 aa).

Residues 1–16 (MSAGNMSHDLGPPRDP) are Extracellular-facing. N-linked (GlcNAc...) asparagine glycosylation occurs at N5. Residues 17–37 (LAIVIPVTVVYSLIFITGVVG) traverse the membrane as a helical segment. Topologically, residues 38–53 (NISTCIVIKKNRSMHT) are cytoplasmic. The helical transmembrane segment at 54 to 74 (ATNYYLFSLAISDFLLLLSGV) threads the bilayer. The Extracellular segment spans residues 75 to 96 (PQEVSYIWSKYPYVFGEYICIG). Cysteines 94 and 171 form a disulfide. A helical transmembrane segment spans residues 97 to 117 (RGLLAETSANATVLTITAFTV). Topologically, residues 118–140 (ERYIAICHPFLGQAMSKLSRAIR) are cytoplasmic. Residues 141–161 (IIVLVWIMAIVTAIPQAAQFG) form a helical membrane-spanning segment. The Extracellular segment spans residues 162–185 (IEHYSGVEQCGIVRVIVKHSFQLS). A helical transmembrane segment spans residues 186–206 (TFIFFLAPMSIILVLYLLIGV). Over 207-281 (HLYRSTLVEG…GRLNHYGTRR (75 aa)) the chain is Cytoplasmic. A helical membrane pass occupies residues 282–302 (VLRMLVAVVVCFFLCWAPFHA). Residues 303–321 (QRLIAIYAPARGAKLRDQH) lie on the Extracellular side of the membrane. A helical transmembrane segment spans residues 322–342 (EFVYTVMTYVSGVLYYLSTCI). Residues 343 to 430 (NPLLYNIMSH…QYAMIGVQVN (88 aa)) lie on the Cytoplasmic side of the membrane. Residues 388 to 397 (TNSSQTQRFS) are compositionally biased toward polar residues. A disordered region spans residues 388 to 413 (TNSSQTQRFSIESAEQPKPSIMQNPT).

Belongs to the G-protein coupled receptor 1 family.

Its subcellular location is the cell membrane. Receptor for the neuropeptide CAP-3/pyrokinin-1 (TGPSASSGLWFGPRL-amide). Also activated weakly by other neuropeptides terminating in the sequence PRL-amide including pyrokinin-2, Hug-gamma, and ecdysis-triggering-hormone-1. The activity of this receptor is mediated by G proteins which activate a phosphatidyl-inositol-calcium second messenger system. This chain is Pyrokinin-1 receptor, found in Drosophila melanogaster (Fruit fly).